The sequence spans 361 residues: tRNA-specific 2-thiouridylase MnmA (361 aa).

ATP is bound by residues 8–15 and M34; that span reads AMSGGVDS. The active-site Nucleophile is the C104. A disulfide bond links C104 and C202. G128 is a binding site for ATP. Residues 152 to 154 are interaction with tRNA; it reads KDQ. The active-site Cysteine persulfide intermediate is the C202. The tract at residues 307-308 is interaction with tRNA; that stretch reads RY.

Belongs to the MnmA/TRMU family.

It is found in the cytoplasm. The enzyme catalyses S-sulfanyl-L-cysteinyl-[protein] + uridine(34) in tRNA + AH2 + ATP = 2-thiouridine(34) in tRNA + L-cysteinyl-[protein] + A + AMP + diphosphate + H(+). Catalyzes the 2-thiolation of uridine at the wobble position (U34) of tRNA, leading to the formation of s(2)U34. The sequence is that of tRNA-specific 2-thiouridylase MnmA from Caldicellulosiruptor saccharolyticus (strain ATCC 43494 / DSM 8903 / Tp8T 6331).